Here is a 488-residue protein sequence, read N- to C-terminus: Katanin p60 ATPase-containing subunit A-like 1 (488 aa).

M1 carries the N-acetylmethionine modification. Residues D95–F179 are disordered. Over residues P116–V127 the composition is skewed to basic and acidic residues. The segment covering G128–A138 has biased composition (low complexity). Residues S142–V167 are compositionally biased toward basic and acidic residues. S172 carries the phosphoserine modification. Residue G246–T253 participates in ATP binding.

The protein belongs to the AAA ATPase family. Katanin p60 subunit A1 subfamily. A-like 1 sub-subfamily. Interacts with KATNB1 and KATNBL1. Widely expressed, including in testis, brain, heart, lung, kidney, liver, spleen, seminal vesicles and ovary. In testis, restricted to Sertoli cells within the seminiferous epithelium (at protein level).

It is found in the cytoplasm. The protein localises to the cytoskeleton. The protein resides in the spindle pole. It localises to the spindle. It carries out the reaction n ATP + n H2O + a microtubule = n ADP + n phosphate + (n+1) alpha/beta tubulin heterodimers.. Regulates microtubule dynamics in Sertoli cells, a process that is essential for spermiogenesis and male fertility. Severs microtubules in an ATP-dependent manner, promoting rapid reorganization of cellular microtubule arrays. Has microtubule-severing activity in vitro. In Mus musculus (Mouse), this protein is Katanin p60 ATPase-containing subunit A-like 1 (Katnal1).